The sequence spans 710 residues: MAATLPLCAALRSPVSSRRFAPIHKTDVPFQFNVVLSPFFGSVAIGGRIFPRLPAAKQETDQDEVGFDQQPSQELAIASACLVGVLTGVSVVLFNNCVHLLRDFSWDGIPDRGASWLREAPIGSNWLRVILVPTIGGLVVSILNQLRESAGKSTGDSHSSLDRVKAVLRPFLKTVAACVTLGTGNSLGPEGPSVEIGASIAKGVNSLFNKSPQTGFSLLAAGSAAGISSGFNAAVAGCFFAVESVLWPSSSTDSSTSLPNTTSMVILSAVTASVVSEIGLGSEPAFKVPDYDFRSPGELPLYLLLGALCGLVSLALSRCTSSMTSAVDSLNKDAGIPKAVFPVMGGLSVGIIALVYPEVLYWGFQNVDILLEKRPFVKGLSADLLLQLVAVKIAATAWCRASGLVGGYYAPSLFIGGAAGMAYGKFIGLALAQNPDFNLSILEVASPQAYGLVGMAATLAGVCQVPLTAVLLLFELTQDYRIVLPLLGAVGMSSWITSGQSKRQETRETKETRKRKSQEAVQSLTSSDDESSTNNLCEVESSLCLDDSLNQSEELPKSIFVSEAMRTRFATVMMSTSLEEALTRMLIEKQSCALIVDPDNIFLGILTLSDIQEFSKARKEGNNRPKDIFVNDICSRSGGKCKVPWTVTPDMDLLAAQTIMNKHELSHVAVVSGSIDAPRIHPVGVLDRECITLTRRALATRMYLLNSLYL.

The next 12 membrane-spanning stretches (helical) occupy residues 74-94 (ELAI…VVLF), 122-142 (IGSN…VVSI), 164-184 (VKAV…LGTG), 193-213 (SVEI…KSPQ), 222-242 (GSAA…FFAV), 261-281 (TTSM…IGLG), 296-316 (PGEL…SLAL), 340-360 (VFPV…PEVL), 379-399 (GLSA…TAWC), 412-432 (SLFI…LALA), 451-471 (GLVG…TAVL), and 472-492 (LLFE…AVGM). Positions 500–534 (QSKRQETRETKETRKRKSQEAVQSLTSSDDESSTN) are disordered. The segment covering 502–511 (KRQETRETKE) has biased composition (basic and acidic residues). Residues 520–534 (AVQSLTSSDDESSTN) show a composition bias toward polar residues. 2 CBS domains span residues 565-624 (MRTR…GNNR) and 640-702 (KCKV…ATRM). A helical membrane pass occupies residues 667–687 (HVAVVSGSIDAPRIHPVGVLD).

The protein belongs to the chloride channel (TC 2.A.49) family. In terms of assembly, homodimer.

The protein localises to the membrane. It carries out the reaction 2 chloride(in) + H(+)(out) = 2 chloride(out) + H(+)(in). In terms of biological role, voltage-gated thylakoid chloride (Cl) channel/transporter involved in chloride homeostasis after transition from light to dark. Influences chloroplast ultrastructure and subsequent photosynthetic electron transport. During photosynthetic response on transition from dark to low light, involved in a sequential mechanism of adaptation; VCCN1 and CLCe first trigger the activation of photoprotection, which is later down-regulated by KEA3 to a low steady state, while adjusting electron transport. Regulates photosynthesis by a pH-independent mechanism likely involving Cl(-) homeostasis. The protein is Chloride channel protein CLC-e of Arabidopsis thaliana (Mouse-ear cress).